A 158-amino-acid chain; its full sequence is Protein hunchback (158 aa).

Basic residues predominate over residues 18-34; the sequence is HNHHHHHHHGHHQHQQR. Disordered stretches follow at residues 18–96 and 118–158; these read HNHH…TTTA and LTPP…KYMA. A compositionally biased stretch (polar residues) spans 41–50; that stretch reads ASSPHQSPLP. Residues 52 to 65 show a composition bias toward low complexity; the sequence is LQLEQYLKQQQQQP. The span at 139–158 shows a compositional bias: basic and acidic residues; sequence EPEKEHDLMSNSSEDMKYMA.

The protein belongs to the hunchback C2H2-type zinc-finger protein family.

Its subcellular location is the nucleus. Functionally, gap class segmentation protein that controls development of head structures. This is Protein hunchback (hb) from Drosophila mimica (Fruit fly).